The following is a 5430-amino-acid chain: Microtubule-actin cross-linking factor 1 (5430 aa).

The tract at residues 1–47 (MSSSDEETLSERSCRSERSCRSERSYRSERSGSLSPCPPGDTLPWNL) is disordered. An actin-binding region spans residues 1–295 (MSSSDEETLS…VITYVSSIYD (295 aa)). Position 4 is a phosphoserine (Ser4). Over residues 9-30 (LSERSCRSERSCRSERSYRSER) the composition is skewed to basic and acidic residues. Ser35 and Ser57 each carry phosphoserine. Calponin-homology (CH) domains lie at 78–181 (RVQK…LHFQ) and 194–298 (MSAK…DAFP). LRR repeat units follow at residues 148–171 (QRQVKLVNIRNDDITDGNPKLTLG) and 240–264 (LVDMERVQIQSNRENLEQAFEVAER). A Phosphoserine modification is found at Ser280. LRR repeat units lie at residues 377-399 (LYKLLEVWIEFGRIKLPQGYHPN) and 441-464 (LNCEEKLTLAKNTLQADAAHLESG). In terms of domain architecture, SH3 spans 868–925 (KSTLSVKAICDYRQIEITICKNDECVLEDNSQRTKWKVISPTGNEAMVPSVCLLIPPP). Residues 1050–1073 (ISELKNIRLRLEECEQRLLKQIQS) form an LRR 5 repeat. A Phosphoserine modification is found at Ser1122. 3 LRR repeats span residues 1128-1154 (ATTLRSELNLMVEKMDHVYGLSIVCLN), 1187-1210 (PADLSALESHRTTLQHWLSDVKDK), and 1257-1282 (HRVIAQLETRQSEVESIQEVLRDYRA). A phosphoserine mark is found at Ser1367 and Ser1376. LRR repeat units lie at residues 1579–1602 (QQELSALQQNQSDLKDLQGDIQNH) and 1629–1653 (LTALREKLYQAKEQYEGLQDRTREA). Spectrin repeat units follow at residues 1816 to 1891 (ELQK…NFEE) and 1933 to 2041 (QYQQ…ALLQ). Residue Ser1860 is modified to Phosphoserine. The LRR 11 repeat unit spans residues 1869–1891 (KGDLRFVTISGQKVLETENNFEE). LRR repeat units follow at residues 2058-2083 (LQSMKEVEQNLEGEQVAALSSGLIQE) and 2194-2220 (IQELTLEMEDQKENLGTLEHLVTALGS). Residues 2399–2507 (RMEEVQKEAS…TVARQKQLEE (109 aa)) form a Spectrin 3 repeat. A phosphoserine mark is found at Ser2429 and Ser2454. LRR repeat units lie at residues 2444-2467 (KAFLAELEQNSPKIQKVKEALAGL), 2534-2557 (GVLGPLSIDPNMLNAQKQQVQFML), and 2702-2725 (KKRLETVALPLQGLEDLAADRMNR). Spectrin repeat units follow at residues 2733-2837 (TQQF…SRLK) and 2842-2945 (KAQK…SLEE). Phosphoserine occurs at positions 2769 and 2895. LRR repeat units lie at residues 2984–3009 (NKNLEKLKAQREVLQALDPQVDYLRD), 3105–3127 (NKIQALRLDIEDSEAECRKMLEE), and 3214–3237 (KEQVDPLQVKLQQVNGLGQGLIQS). Spectrin repeat units lie at residues 3169 to 3274 (EDFY…QLQE), 3281 to 3383 (KFQD…QLED), 3388 to 3491 (AKQF…SLLE), 3714 to 3818 (RSQQ…ARLE), 3825 to 3927 (NQFW…ALDE), 4047 to 4152 (LAEK…KLED), 4157 to 4261 (AVQY…HKLE), 4267 to 4370 (LGQF…QQLQ), 4375 to 4481 (QAQG…KLEE), 4486 to 4589 (ATEF…RSLD), 4594 to 4700 (RAKQ…KLEE), 4707 to 4808 (QFMD…RLEQ), and 4812 to 4916 (QAEE…QRLE). Thr3368 carries the post-translational modification Phosphothreonine. 2 LRR repeats span residues 3737-3761 (MALGPIRLEQDQTTAQLQVQKAFSI) and 3846-3870 (AQLPPPAVDHEQLRQQQEEMRQLRE). Residue Ser4074 is modified to Phosphoserine. Lys4252 is modified (N6-acetyllysine). Residues 4538–4561 (RDQIIELDQTGNQLKFLSQKQDVV) form an LRR 22 repeat. Residues 4993-5023 (PTHAPFIEKSRSGSRKSLNQPTPPPMPILSQ) are disordered. Ser5009 is modified (phosphoserine). EF-hand domains lie at 5083–5118 (HKKSRVMDFFRRIDKDQDGKITRQEFIDGILASKFP) and 5119–5154 (TTKLEMTAVADIFDRDGDGYIDYYEFVAALHPNKDA). 10 residues coordinate Ca(2+): Asp5096, Asp5098, Asp5100, Lys5102, Glu5107, Asp5132, Asp5134, Asp5136, Tyr5138, and Glu5143. The region spanning 5159-5231 (TDADKIEDEV…EFLVKNDPCR (73 aa)) is the GAR domain. The C-terminal tail stretch occupies residues 5159–5430 (TDADKIEDEV…ASPRTPCPKR (272 aa)). The interval 5247-5430 (PEGASQGMTP…ASPRTPCPKR (184 aa)) is disordered. The segment covering 5267-5301 (SSRAASPTRSSSSASQSNHSCTSMPSSPATPASGT) has biased composition (low complexity). Thr5296 bears the Phosphothreonine mark. The segment covering 5317 to 5341 (TFHSSRTSLAGDTSNSSSPASTGAK) has biased composition (polar residues). Phosphoserine occurs at positions 5321 and 5334. Positions 5352-5366 (SRPGSRAGSRAGSRA) are enriched in low complexity. A 4 X 4 AA tandem repeats of [GS]-S-R-[AR] region spans residues 5355–5370 (GSRAGSRAGSRASSRR). Phosphoserine is present on residues Ser5372 and Ser5375. Positions 5381–5391 (ETQSACSDTSE) are enriched in polar residues. Positions 5392 to 5403 (SSAAGGQGSSRR) are enriched in low complexity.

The protein belongs to the plakin or cytolinker family. In terms of assembly, interacts with MAPRE1, CLASP1, CLASP2 and GOLGA4. Interacts with AXIN1 and LRP6. Found in a complex composed of MACF1, APC; AXIN1, CTNNB1 and GSK3B. Interacts with CAMSAP3. In terms of processing, phosphorylated on serine residues in the C-terminal tail by GSK3B. Phosphorylation inhibits microtubule-binding and this plays a critical role in bulge stem cell migration and skin wound repair. Wnt-signaling can repress phosphorylation.

The protein localises to the cytoplasm. It is found in the cytoskeleton. The protein resides in the golgi apparatus. It localises to the cell membrane. Its subcellular location is the cell projection. The protein localises to the ruffle membrane. It is found in the membrane. Functionally, F-actin-binding protein which plays a role in cross-linking actin to other cytoskeletal proteins and also binds to microtubules. Plays an important role in ERBB2-dependent stabilization of microtubules at the cell cortex. Acts as a positive regulator of Wnt receptor signaling pathway and is involved in the translocation of AXIN1 and its associated complex (composed of APC, CTNNB1 and GSK3B) from the cytoplasm to the cell membrane. Has actin-regulated ATPase activity and is essential for controlling focal adhesions (FAs) assembly and dynamics. Interaction with CAMSAP3 at the minus ends of non-centrosomal microtubules tethers microtubules minus-ends to actin filaments, regulating focal adhesion size and cell migration. May play role in delivery of transport vesicles containing GPI-linked proteins from the trans-Golgi network through its interaction with GOLGA4. Plays a key role in wound healing and epidermal cell migration. Required for efficient upward migration of bulge cells in response to wounding and this function is primarily rooted in its ability to coordinate microtubule dynamics and polarize hair follicle stem cells. As a regulator of actin and microtubule arrangement and stabilization, it plays an essential role in neurite outgrowth, branching and spine formation during brain development. The polypeptide is Microtubule-actin cross-linking factor 1 (Rattus norvegicus (Rat)).